Consider the following 554-residue polypeptide: Phenylalanine--tRNA ligase beta subunit (554 aa).

The region spanning Leu-274 to Gly-351 is the B5 domain. Residues Asp-329, Asp-335, and Asp-339 each coordinate Mg(2+).

It belongs to the phenylalanyl-tRNA synthetase beta subunit family. Type 2 subfamily. Tetramer of two alpha and two beta subunits. Mg(2+) is required as a cofactor.

The protein localises to the cytoplasm. It carries out the reaction tRNA(Phe) + L-phenylalanine + ATP = L-phenylalanyl-tRNA(Phe) + AMP + diphosphate + H(+). The protein is Phenylalanine--tRNA ligase beta subunit of Methanococcus aeolicus (strain ATCC BAA-1280 / DSM 17508 / OCM 812 / Nankai-3).